The primary structure comprises 215 residues: Adenylate kinase (215 aa).

10 to 15 is an ATP binding site; sequence GAGKGT. Positions 30-59 are NMP; sequence STGDIFRKNISENTPLGMEARSYMDKGLLV. AMP contacts are provided by residues Thr31, Arg36, 57–59, 85–88, and Gln92; these read LLV and GFPR. Residues 126-163 form an LID region; sequence GRRVCTSCGGSFHIKFNPPTIDGKCNLCGSDIVQRKDD. Position 127 (Arg127) interacts with ATP. Positions 130 and 133 each coordinate Zn(2+). 136-137 is a binding site for ATP; sequence SF. Zn(2+) contacts are provided by Cys150 and Cys153. Residues Arg160 and Arg171 each coordinate AMP. Residue Lys199 participates in ATP binding.

Belongs to the adenylate kinase family. In terms of assembly, monomer.

Its subcellular location is the cytoplasm. It catalyses the reaction AMP + ATP = 2 ADP. It participates in purine metabolism; AMP biosynthesis via salvage pathway; AMP from ADP: step 1/1. In terms of biological role, catalyzes the reversible transfer of the terminal phosphate group between ATP and AMP. Plays an important role in cellular energy homeostasis and in adenine nucleotide metabolism. In Clostridium botulinum (strain Alaska E43 / Type E3), this protein is Adenylate kinase.